A 344-amino-acid chain; its full sequence is Methionine import ATP-binding protein MetN 1 (344 aa).

One can recognise an ABC transporter domain in the interval 2 to 241 (IEIRNISQRF…PHHEVTRALI (240 aa)). 38–45 (GRSGAGKS) contributes to the ATP binding site.

This sequence belongs to the ABC transporter superfamily. Methionine importer (TC 3.A.1.24) family. In terms of assembly, the complex is composed of two ATP-binding proteins (MetN), two transmembrane proteins (MetI) and a solute-binding protein (MetQ).

It is found in the cell inner membrane. The catalysed reaction is L-methionine(out) + ATP + H2O = L-methionine(in) + ADP + phosphate + H(+). The enzyme catalyses D-methionine(out) + ATP + H2O = D-methionine(in) + ADP + phosphate + H(+). In terms of biological role, part of the ABC transporter complex MetNIQ involved in methionine import. Responsible for energy coupling to the transport system. The sequence is that of Methionine import ATP-binding protein MetN 1 from Paraburkholderia xenovorans (strain LB400).